Consider the following 76-residue polypeptide: Omega-agatoxin-Aa3a (76 aa).

6 cysteine pairs are disulfide-bonded: cysteine 2-cysteine 19, cysteine 9-cysteine 25, cysteine 16-cysteine 52, cysteine 18-cysteine 40, cysteine 27-cysteine 38, and cysteine 59-cysteine 67.

It belongs to the neurotoxin 04 (omega-agtx) family. 03 (type II/III omega-agtx) subfamily. As to expression, expressed by the venom gland.

The protein localises to the secreted. Omega-agatoxin are antagonist of voltage-gated calcium channels. They block insect neuromuscular transmission presynaptically. Potent blocker of N- (Cav2.2/CACNA1B) and L-type (Cav1/CACNA1) calcium channels. In Agelenopsis aperta (North American funnel-web spider), this protein is Omega-agatoxin-Aa3a.